The sequence spans 214 residues: Probable transaldolase (214 aa).

Lys-83 acts as the Schiff-base intermediate with substrate in catalysis.

Belongs to the transaldolase family. Type 3B subfamily.

The protein resides in the cytoplasm. The catalysed reaction is D-sedoheptulose 7-phosphate + D-glyceraldehyde 3-phosphate = D-erythrose 4-phosphate + beta-D-fructose 6-phosphate. It functions in the pathway carbohydrate degradation; pentose phosphate pathway; D-glyceraldehyde 3-phosphate and beta-D-fructose 6-phosphate from D-ribose 5-phosphate and D-xylulose 5-phosphate (non-oxidative stage): step 2/3. Its function is as follows. Transaldolase is important for the balance of metabolites in the pentose-phosphate pathway. The polypeptide is Probable transaldolase (Geobacter sulfurreducens (strain ATCC 51573 / DSM 12127 / PCA)).